The following is a 784-amino-acid chain: Homoaconitase, mitochondrial (784 aa).

The transit peptide at 1–32 directs the protein to the mitochondrion; the sequence is MIHPVRRALAVAASRAPRQFLAAASRTTSVRS. Residues Cys399, Cys468, and Cys471 each contribute to the [4Fe-4S] cluster site. The disordered stretch occupies residues 572-596; sequence EAGLTPESTSSSSSSSSSSEEESLT. A compositionally biased stretch (low complexity) spans 578–589; that stretch reads ESTSSSSSSSSS.

The protein belongs to the aconitase/IPM isomerase family. [4Fe-4S] cluster serves as cofactor.

It localises to the mitochondrion. It catalyses the reaction (2R,3S)-homoisocitrate = cis-homoaconitate + H2O. The protein operates within amino-acid biosynthesis; L-lysine biosynthesis via AAA pathway; L-alpha-aminoadipate from 2-oxoglutarate: step 3/5. Functionally, catalyzes the reversible hydration of cis-homoaconitate to (2R,3S)-homoisocitrate, a step in the alpha-aminoadipate pathway for lysine biosynthesis. The chain is Homoaconitase, mitochondrial (lys-4) from Neurospora crassa (strain ATCC 24698 / 74-OR23-1A / CBS 708.71 / DSM 1257 / FGSC 987).